The sequence spans 40 residues: Photosystem II reaction center protein J (40 aa).

Residues 8–28 (IPLWLIGTVTGIPVIGLVGVF) traverse the membrane as a helical segment.

It belongs to the PsbJ family. In terms of assembly, PSII is composed of 1 copy each of membrane proteins PsbA, PsbB, PsbC, PsbD, PsbE, PsbF, PsbH, PsbI, PsbJ, PsbK, PsbL, PsbM, PsbT, PsbX, PsbY, PsbZ, Psb30/Ycf12, at least 3 peripheral proteins of the oxygen-evolving complex and a large number of cofactors. It forms dimeric complexes.

It localises to the plastid. The protein localises to the chloroplast thylakoid membrane. Functionally, one of the components of the core complex of photosystem II (PSII). PSII is a light-driven water:plastoquinone oxidoreductase that uses light energy to abstract electrons from H(2)O, generating O(2) and a proton gradient subsequently used for ATP formation. It consists of a core antenna complex that captures photons, and an electron transfer chain that converts photonic excitation into a charge separation. The polypeptide is Photosystem II reaction center protein J (Lolium perenne (Perennial ryegrass)).